Reading from the N-terminus, the 302-residue chain is tRNA dimethylallyltransferase (302 aa).

21 to 28 lines the ATP pocket; that stretch reads GPTASGKS. Position 23–28 (23–28) interacts with substrate; the sequence is TASGKS.

The protein belongs to the IPP transferase family. Monomer. Requires Mg(2+) as cofactor.

It catalyses the reaction adenosine(37) in tRNA + dimethylallyl diphosphate = N(6)-dimethylallyladenosine(37) in tRNA + diphosphate. Its function is as follows. Catalyzes the transfer of a dimethylallyl group onto the adenine at position 37 in tRNAs that read codons beginning with uridine, leading to the formation of N6-(dimethylallyl)adenosine (i(6)A). This chain is tRNA dimethylallyltransferase, found in Paracoccus denitrificans (strain Pd 1222).